The sequence spans 815 residues: Capsid vertex component 1 (815 aa).

Disordered regions lie at residues 227 to 280 (THEQ…GDRE) and 795 to 815 (RAPS…TILY). Basic and acidic residues-rich tracts occupy residues 236 to 262 (PPKE…KDAA) and 271 to 280 (NRQREPGDRE). A compositionally biased stretch (polar residues) spans 799–809 (DFSTTSTSGHE).

The protein belongs to the herpesviridae CVC1 protein family. In terms of assembly, interacts (via C-terminus) with capsid vertex component 2/CVC2.

It is found in the virion. The protein localises to the host nucleus. In terms of biological role, capsid vertex-specific component that plays a role during viral DNA encapsidation, assuring correct genome cleavage and presumably stabilizing capsids that contain full-length viral genomes. In Amazona oratrix (yellow-headed parrot), this protein is Capsid vertex component 1.